The sequence spans 584 residues: Zinc finger and BTB domain-containing protein 7A (584 aa).

The 68-residue stretch at 34-101 (CDVVILVEGR…AYTATLTVST (68 aa)) folds into the BTB domain. The interval 220–313 (YGPGPPAERP…EDGDGPDVDG (94 aa)) is disordered. The mediates interaction with KHDRBS1 stretch occupies residues 277-584 (EEEAASLSEA…TDGNFTAGLA (308 aa)). The span at 281 to 290 (ASLSEAAPEP) shows a compositional bias: low complexity. Ser-337 and Ser-341 each carry phosphoserine. The segment at 349 to 584 (MDYYLKYFSG…TDGNFTAGLA (236 aa)) is mediates interaction with RELA. The tract at residues 377–584 (RAKAFQKCPI…TDGNFTAGLA (208 aa)) is mediates interaction with SMAD4. 2 C2H2-type zinc fingers span residues 382–404 (QKCP…IRTH) and 410–432 (YECN…MRKH). Lys-436 is covalently cross-linked (Glycyl lysine isopeptide (Lys-Gly) (interchain with G-Cter in SUMO2)). A C2H2-type 3 zinc finger spans residues 438–460 (YLCQQCGAAFAHNYDLKNHMRVH). A C2H2-type 4; atypical zinc finger spans residues 466-490 (YQCDSCCKTFVRSDHLHRHLKKDGC). A disordered region spans residues 486-584 (KKDGCNGVPS…TDGNFTAGLA (99 aa)). Low complexity predominate over residues 505 to 527 (GGAPDPSPGATATPGAPAQPSSP). Residues Ser-511, Ser-525, and Ser-526 each carry the phosphoserine modification. The segment covering 528-540 (DARRNGQEKHFKD) has biased composition (basic and acidic residues). Lys-539 is covalently cross-linked (Glycyl lysine isopeptide (Lys-Gly) (interchain with G-Cter in SUMO2)). Ser-549 is modified (phosphoserine). Positions 560–572 (GAGGGGDSGGGPG) are enriched in gly residues.

As to quaternary structure, homodimer. Interacts with BCL6. Interacts with RELA; involved in the control by RELA of the accessibility of target gene promoters. Interacts with AR (via NR LBD domain); the interaction is direct and androgen-dependent. Interacts with NCOR1. Interacts with NCOR2. Interacts with SMAD4; the interaction is direct and stimulated by TGFB1. Interacts with HDAC1. Interacts with SP1; ZBTB7A prevents the binding to GC-rich motifs in promoters and represses the transcriptional activity of SP1. Interacts with the DNA-dependent protein kinase complex/DNA-PKc. Interacts with KHDRBS1; negatively regulates KHDRBS1 splicing activity. Post-translationally, sumoylated. Undergoes sumoylation with SUMO1 that may regulate its transcriptional activity. In terms of tissue distribution, widely expressed. In normal thymus, expressed in medullary epithelial cells and Hassle's corpuscles (at protein level). In tonsil, expressed in squamous epithelium and germinal center lymphocytes (at protein level). Up-regulated in a subset of lymphomas, as well as in a subset of breast, lung, colon, prostate and bladder carcinomas (at protein level). Expressed in adipose tissues.

Its subcellular location is the nucleus. Its function is as follows. Transcription factor that represses the transcription of a wide range of genes involved in cell proliferation and differentiation. Directly and specifically binds to the consensus sequence 5'-[GA][CA]GACCCCCCCCC-3' and represses transcription both by regulating the organization of chromatin and through the direct recruitment of transcription factors to gene regulatory regions. Negatively regulates SMAD4 transcriptional activity in the TGF-beta signaling pathway through these two mechanisms. That is, recruits the chromatin regulator HDAC1 to the SMAD4-DNA complex and in parallel prevents the recruitment of the transcriptional activators CREBBP and EP300. Collaborates with transcription factors like RELA to modify the accessibility of gene transcription regulatory regions to secondary transcription factors. Also directly interacts with transcription factors like SP1 to prevent their binding to DNA. Functions as an androgen receptor/AR transcriptional corepressor by recruiting NCOR1 and NCOR2 to the androgen response elements/ARE on target genes. Thereby, negatively regulates androgen receptor signaling and androgen-induced cell proliferation. Involved in the switch between fetal and adult globin expression during erythroid cells maturation. Through its interaction with the NuRD complex regulates chromatin at the fetal globin genes to repress their transcription. Specifically represses the transcription of the tumor suppressor ARF isoform from the CDKN2A gene. Efficiently abrogates E2F1-dependent CDKN2A transactivation. Regulates chondrogenesis through the transcriptional repression of specific genes via a mechanism that also requires histone deacetylation. Regulates cell proliferation through the transcriptional regulation of genes involved in glycolysis. Involved in adipogenesis through the regulation of genes involved in adipocyte differentiation. Plays a key role in the differentiation of lymphoid progenitors into B and T lineages. Promotes differentiation towards the B lineage by inhibiting the T-cell instructive Notch signaling pathway through the specific transcriptional repression of Notch downstream target genes. Also regulates osteoclast differentiation. May also play a role, independently of its transcriptional activity, in double-strand break repair via classical non-homologous end joining/cNHEJ. Recruited to double-strand break sites on damage DNA, interacts with the DNA-dependent protein kinase complex and directly regulates its stability and activity in DNA repair. May also modulate the splicing activity of KHDRBS1 toward BCL2L1 in a mechanism which is histone deacetylase-dependent and thereby negatively regulates the pro-apoptotic effect of KHDRBS1. This Homo sapiens (Human) protein is Zinc finger and BTB domain-containing protein 7A.